We begin with the raw amino-acid sequence, 194 residues long: Peptidyl-tRNA hydrolase (194 aa).

Y17 is a binding site for tRNA. The Proton acceptor role is filled by H22. TRNA contacts are provided by Y68, N70, and N116.

The protein belongs to the PTH family. As to quaternary structure, monomer.

Its subcellular location is the cytoplasm. It catalyses the reaction an N-acyl-L-alpha-aminoacyl-tRNA + H2O = an N-acyl-L-amino acid + a tRNA + H(+). Its function is as follows. Hydrolyzes ribosome-free peptidyl-tRNAs (with 1 or more amino acids incorporated), which drop off the ribosome during protein synthesis, or as a result of ribosome stalling. Catalyzes the release of premature peptidyl moieties from peptidyl-tRNA molecules trapped in stalled 50S ribosomal subunits, and thus maintains levels of free tRNAs and 50S ribosomes. This chain is Peptidyl-tRNA hydrolase, found in Pseudomonas entomophila (strain L48).